We begin with the raw amino-acid sequence, 529 residues long: 56 kDa type-specific antigen (529 aa).

A signal peptide spans 1 to 22; the sequence is MKKIMLIASAMSALSLPFSASA. A helical membrane pass occupies residues 67 to 87; sequence LTTSMPFGGTLAAGMTIAPGF. The segment covering 106–116 has biased composition (basic and acidic residues); it reads GKTGSDADIRS. Disordered regions lie at residues 106–134 and 392–424; these read GKTGSDADIRSGADSPMPQRYKLTPPQPT and DGGCNGGGDNKKKRGASEDSDAGGASKGGKGKE. A helical membrane pass occupies residues 477-492; it reads TGMVASGALGVAINAA.

The protein localises to the cell membrane. May be an adherent factor for rickettsial adsorption to the host-cell surface and a determinant of virulence of individual rickettsial strain. It is the major outer membrane protein. In Orientia tsutsugamushi (Rickettsia tsutsugamushi), this protein is 56 kDa type-specific antigen.